The following is a 319-amino-acid chain: MTILAWCIAWVLDFIIGDPQHWPHPVRWIGRLITFVQRIVRRYCPGDKALRIGGGVMWVVVVGVTWGVAWGVLALAQRIHPWFGWSVEVWMIFTTLAGRSLARAAQEFERPLRENDLAESRIKLSWIVGRDTSQLQPAQINRAVVETVAENTVDGIIAPLFFLFLGGAPLAMAYKAVNTLDSMVGYKHEKYRAIGMVSARMDDVANYLPARLSWLLLGIAAGLCRLSDWRALRIGWRDRYNHSSPNCAWSEACVAGALGIQLGGPNNYFGERVDKPWIGDAQRGISVDDISRTIRLMWVASTLALALFIAARCGLSGVA.

The next 4 membrane-spanning stretches (helical) occupy residues 56-76 (VMWV…LALA), 82-102 (WFGW…RSLA), 153-173 (VDGI…LAMA), and 296-316 (LMWV…CGLS).

This sequence belongs to the CobD/CbiB family.

It is found in the cell membrane. The protein operates within cofactor biosynthesis; adenosylcobalamin biosynthesis. In terms of biological role, converts cobyric acid to cobinamide by the addition of aminopropanol on the F carboxylic group. However, the true cosubstrate could be (R)-1-amino-2-propanol O-2-phosphate, leading to cobinamide phosphate. This is Cobalamin biosynthesis protein CbiB from Salmonella paratyphi A (strain ATCC 9150 / SARB42).